The primary structure comprises 478 residues: Glutamate-1-semialdehyde 2,1-aminomutase, chloroplastic (478 aa).

At Lys-318 the chain carries N6-(pyridoxal phosphate)lysine.

The protein belongs to the class-III pyridoxal-phosphate-dependent aminotransferase family. HemL subfamily. Homodimer. Pyridoxal 5'-phosphate is required as a cofactor.

The protein localises to the plastid. The protein resides in the chloroplast. It catalyses the reaction (S)-4-amino-5-oxopentanoate = 5-aminolevulinate. Its pathway is porphyrin-containing compound metabolism; protoporphyrin-IX biosynthesis; 5-aminolevulinate from L-glutamyl-tRNA(Glu): step 2/2. It functions in the pathway porphyrin-containing compound metabolism; chlorophyll biosynthesis. The chain is Glutamate-1-semialdehyde 2,1-aminomutase, chloroplastic (GSA) from Nicotiana tabacum (Common tobacco).